A 142-amino-acid chain; its full sequence is Large ribosomal subunit protein uL13 (142 aa).

This sequence belongs to the universal ribosomal protein uL13 family. In terms of assembly, part of the 50S ribosomal subunit.

Functionally, this protein is one of the early assembly proteins of the 50S ribosomal subunit, although it is not seen to bind rRNA by itself. It is important during the early stages of 50S assembly. This chain is Large ribosomal subunit protein uL13, found in Alcanivorax borkumensis (strain ATCC 700651 / DSM 11573 / NCIMB 13689 / SK2).